The chain runs to 560 residues: Cytosolic purine 5'-nucleotidase (560 aa).

Asp52 functions as the Nucleophile in the catalytic mechanism. IMP-binding residues include Asp52 and Asp54. Residues Asp52 and Asp54 each contribute to the Mg(2+) site. Asp54 serves as the catalytic Proton donor. Residues Arg144 and Asn154 each coordinate ATP. IMP-binding residues include Arg202, Asp206, Lys215, Thr249, Asn250, Ser251, and Lys292. Asp351 serves as a coordination point for Mg(2+). Ser418 carries the phosphoserine modification. The ATP site is built by Gln453 and Arg456. 3 positions are modified to phosphoserine: Ser502, Ser511, and Ser527. A disordered region spans residues 541–560 (PQEITHCHDEDDDEEEEEEE). The required for tetramer assembly stretch occupies residues 548-560 (HDEDDDEEEEEEE). Over residues 550–560 (EDDDEEEEEEE) the composition is skewed to acidic residues.

Belongs to the 5'(3')-deoxyribonucleotidase family. As to quaternary structure, homotetramer. It depends on Mg(2+) as a cofactor.

Its subcellular location is the cytoplasm. It localises to the cytosol. It carries out the reaction a ribonucleoside 5'-phosphate + H2O = a ribonucleoside + phosphate. The enzyme catalyses a 2'-deoxyribonucleoside + a ribonucleoside 5'-phosphate = a ribonucleoside + a 2'-deoxyribonucleoside 5'-phosphate. It catalyses the reaction IMP + H2O = inosine + phosphate. The catalysed reaction is GMP + H2O = guanosine + phosphate. It carries out the reaction dIMP + H2O = 2'-deoxyinosine + phosphate. The enzyme catalyses dGMP + H2O = 2'-deoxyguanosine + phosphate. It catalyses the reaction XMP + H2O = xanthosine + phosphate. The catalysed reaction is inosine + GMP = guanosine + IMP. It carries out the reaction dGMP + inosine = 2'-deoxyguanosine + IMP. The enzyme catalyses dIMP + inosine = 2'-deoxyinosine + IMP. It catalyses the reaction inosine + UMP = uridine + IMP. The catalysed reaction is inosine + CMP = cytidine + IMP. It carries out the reaction inosine + AMP = IMP + adenosine. Allosterically activated by various compounds including ATP, 2,3-BPG/2,3-Bisphosphoglyceric acid and Ap4A/P1,P4-bis(5'-adenosyl) tetraphosphate. Binding of an allosteric activator is a prerequisiste to magnesium and substrate binding. Inhibited by inorganic phosphate. Its function is as follows. Broad specificity cytosolic 5'-nucleotidase that catalyzes the dephosphorylation of 6-hydroxypurine nucleoside 5'-monophosphates. In addition, possesses a phosphotransferase activity by which it can transfer a phosphate from a donor nucleoside monophosphate to an acceptor nucleoside, preferably inosine, deoxyinosine and guanosine. Has the highest activities for IMP and GMP followed by dIMP, dGMP and XMP. Could also catalyze the transfer of phosphates from pyrimidine monophosphates but with lower efficiency. Through these activities regulates the purine nucleoside/nucleotide pools within the cell. The protein is Cytosolic purine 5'-nucleotidase of Bos taurus (Bovine).